Reading from the N-terminus, the 901-residue chain is Putative serine/threonine-protein kinase YPL150W (901 aa).

Residues 41-287 enclose the Protein kinase domain; sequence YKILKQIGEG…LSQVLRHPFL (247 aa). Residues 47 to 55 and Lys70 each bind ATP; that span reads IGEGSFGKV. The active-site Proton acceptor is Asp157. Ser456 bears the Phosphoserine mark. The segment at 500–530 is disordered; that stretch reads APSSGSFLKKNSGSIQKSRTDTVANPSRTES. Phosphoserine is present on Ser533. Residues 588-599 are compositionally biased toward low complexity; sequence SSISSEISQTST. Disordered stretches follow at residues 588-629 and 745-770; these read SSIS…NRPL and TQRPWTGKRTYTTSRHGKNARRSSKR. Over residues 600 to 613 the composition is skewed to polar residues; that stretch reads GNYDSESAENSRSI. Over residues 759–770 the composition is skewed to basic residues; that stretch reads RHGKNARRSSKR.

It belongs to the protein kinase superfamily. Ser/Thr protein kinase family.

It carries out the reaction L-seryl-[protein] + ATP = O-phospho-L-seryl-[protein] + ADP + H(+). The catalysed reaction is L-threonyl-[protein] + ATP = O-phospho-L-threonyl-[protein] + ADP + H(+). Its function is as follows. Putative serine/threonine-protein kinase. The chain is Putative serine/threonine-protein kinase YPL150W from Saccharomyces cerevisiae (strain ATCC 204508 / S288c) (Baker's yeast).